Here is a 1218-residue protein sequence, read N- to C-terminus: Protein STICHEL (1218 aa).

Residues 24–136 form a disordered region; sequence AGRVLRDPGT…SDARNGGDSY (113 aa). 3 stretches are compositionally biased toward polar residues: residues 32 to 46, 54 to 73, and 86 to 95; these read GTTS…SSRS, ASRN…SSTN, and WKTQKSSSEK. A Bipartite nuclear localization signal motif is present at residues 163–180; it reads RKSNVGSCKKKSKKKISS. 2 consecutive short sequence motifs (PEST) follow at residues 273 to 304 and 425 to 449; these read RNPS…LPGR and RSQD…ETIR. 490 to 497 is an ATP binding site; sequence GPRGTGKT. The Zn(2+) site is built by Cys-509, Cys-518, Cys-521, and Cys-524. Residues 762-788 adopt a coiled-coil conformation; it reads EADMEGLKHALKLLSEAEKQLRVSNDR. The disordered stretch occupies residues 802 to 828; that stretch reads MPSPGTTHTGSSRRQSSRATDDDPASV. Over residues 804–819 the composition is skewed to polar residues; the sequence is SPGTTHTGSSRRQSSR. Short sequence motifs (bipartite nuclear localization signal) lie at residues 1178–1195 and 1196–1213; these read RRSK…SRRN and RKSR…RKAE.

This sequence belongs to the DnaX/STICHEL family. In terms of assembly, interacts with BLT. As to expression, ubiquitous.

It localises to the nucleus. Acts as a key regulator of trichome branching through an endoreduplication-independent pathway. In Arabidopsis thaliana (Mouse-ear cress), this protein is Protein STICHEL (STI).